The chain runs to 474 residues: Glutamate--tRNA ligase (474 aa).

The 'HIGH' region signature appears at 10–20; the sequence is PSPTGYLHIGG. The Zn(2+) site is built by cysteine 107, cysteine 109, cysteine 134, and aspartate 136. The short motif at 244 to 248 is the 'KMSKS' region element; sequence RLSKR. Lysine 247 contributes to the ATP binding site.

This sequence belongs to the class-I aminoacyl-tRNA synthetase family. Glutamate--tRNA ligase type 1 subfamily. Monomer. It depends on Zn(2+) as a cofactor.

The protein localises to the cytoplasm. It carries out the reaction tRNA(Glu) + L-glutamate + ATP = L-glutamyl-tRNA(Glu) + AMP + diphosphate. Functionally, catalyzes the attachment of glutamate to tRNA(Glu) in a two-step reaction: glutamate is first activated by ATP to form Glu-AMP and then transferred to the acceptor end of tRNA(Glu). The protein is Glutamate--tRNA ligase of Anaeromyxobacter sp. (strain K).